A 582-amino-acid chain; its full sequence is ATP-dependent lipid A-core flippase (582 aa).

A run of 5 helical transmembrane segments spans residues 16–36, 63–83, 153–173, 253–273, and 275–295; these read LWPM…ALIL, ILVW…VSGF, IIGL…ILVV, PLIQ…ASFP, and VMET…IALM. In terms of domain architecture, ABC transmembrane type-1 spans 28–310; it reads IVAAIALILN…LTNVNAQFQR (283 aa). The region spanning 342-578 is the ABC transporter domain; sequence IAFDHVTFSY…QGVYAQLHQL (237 aa). 376–383 contributes to the ATP binding site; sequence GRSGSGKS.

It belongs to the ABC transporter superfamily. Lipid exporter (TC 3.A.1.106) family. As to quaternary structure, homodimer.

It is found in the cell inner membrane. It catalyses the reaction ATP + H2O + lipid A-core oligosaccharideSide 1 = ADP + phosphate + lipid A-core oligosaccharideSide 2.. Functionally, involved in lipopolysaccharide (LPS) biosynthesis. Translocates lipid A-core from the inner to the outer leaflet of the inner membrane. Transmembrane domains (TMD) form a pore in the inner membrane and the ATP-binding domain (NBD) is responsible for energy generation. This chain is ATP-dependent lipid A-core flippase, found in Sodalis glossinidius (strain morsitans).